The primary structure comprises 311 residues: CID domain-containing protein 1 (311 aa).

Residues 1 to 134 form the CID domain; it reads MSDFTEQTLR…RLQEAHQQMK (134 aa). The stretch at 224–256 forms a coiled coil; it reads MLEDYVKRLKEETKERESLETNLNMLIQNVRMS.

In Caenorhabditis briggsae, this protein is CID domain-containing protein 1 (cids-1).